The sequence spans 224 residues: Small ribosomal subunit protein uS13 (224 aa).

Residues 1–17 are compositionally biased toward basic and acidic residues; that stretch reads MSEKTDKTEKKQKKAEE. 2 disordered regions span residues 1–64 and 184–224; these read MSEK…AEEK and HERG…EDKK. Low complexity-rich tracts occupy residues 20-30 and 38-47; these read ETASAEAAPAK and AKPAEGAPAD. Basic and acidic residues predominate over residues 210-224; sequence KKGEQGGAAKKEDKK.

Belongs to the universal ribosomal protein uS13 family. Part of the 30S ribosomal subunit. Forms a loose heterodimer with protein S19. Forms two bridges to the 50S subunit in the 70S ribosome.

In terms of biological role, located at the top of the head of the 30S subunit, it contacts several helices of the 16S rRNA. In the 70S ribosome it contacts the 23S rRNA (bridge B1a) and protein L5 of the 50S subunit (bridge B1b), connecting the 2 subunits; these bridges are implicated in subunit movement. This Methanocella arvoryzae (strain DSM 22066 / NBRC 105507 / MRE50) protein is Small ribosomal subunit protein uS13.